We begin with the raw amino-acid sequence, 352 residues long: Ion-translocating oxidoreductase complex subunit D (352 aa).

The next 4 helical transmembrane spans lie at 20–40 (IMLL…WFFG), 42–62 (GTLF…AIVL), 69–91 (VASH…SIPP), and 123–143 (PAMI…TSWL). Thr187 carries the post-translational modification FMN phosphoryl threonine. Transmembrane regions (helical) follow at residues 215–235 (LAGV…VFLL), 242–262 (WHIP…GWLF), 267–287 (LASP…FFIL), 301–321 (LIFG…GGYP), and 322–342 (DGVA…DYYT).

Belongs to the NqrB/RnfD family. In terms of assembly, the complex is composed of six subunits: RsxA, RsxB, RsxC, RsxD, RsxE and RsxG. It depends on FMN as a cofactor.

The protein localises to the cell inner membrane. In terms of biological role, part of a membrane-bound complex that couples electron transfer with translocation of ions across the membrane. Required to maintain the reduced state of SoxR. The sequence is that of Ion-translocating oxidoreductase complex subunit D from Salmonella agona (strain SL483).